Here is a 350-residue protein sequence, read N- to C-terminus: Protein-glutamate methylesterase/protein-glutamine glutaminase (350 aa).

One can recognise a Response regulatory domain in the interval 5–122; sequence TVLCVDDSAL…REGMLAYSEL (118 aa). Residue Asp-56 is modified to 4-aspartylphosphate. A CheB-type methylesterase domain is found at 153–345; the sequence is LLSSEKLIAV…KRMLAKISSG (193 aa). Residues Ser-165, His-191, and Asp-287 contribute to the active site.

The protein belongs to the CheB family. Phosphorylated by CheA. Phosphorylation of the N-terminal regulatory domain activates the methylesterase activity.

The protein resides in the cytoplasm. The catalysed reaction is [protein]-L-glutamate 5-O-methyl ester + H2O = L-glutamyl-[protein] + methanol + H(+). It catalyses the reaction L-glutaminyl-[protein] + H2O = L-glutamyl-[protein] + NH4(+). Involved in chemotaxis. Part of a chemotaxis signal transduction system that modulates chemotaxis in response to various stimuli. Catalyzes the demethylation of specific methylglutamate residues introduced into the chemoreceptors (methyl-accepting chemotaxis proteins or MCP) by CheR. Also mediates the irreversible deamidation of specific glutamine residues to glutamic acid. This is Protein-glutamate methylesterase/protein-glutamine glutaminase from Photorhabdus laumondii subsp. laumondii (strain DSM 15139 / CIP 105565 / TT01) (Photorhabdus luminescens subsp. laumondii).